The chain runs to 315 residues: 4-hydroxy-3-methylbut-2-enyl diphosphate reductase (315 aa).

Cysteine 12 provides a ligand contact to [4Fe-4S] cluster. Residues histidine 40 and histidine 74 each coordinate (2E)-4-hydroxy-3-methylbut-2-enyl diphosphate. 2 residues coordinate dimethylallyl diphosphate: histidine 40 and histidine 74. Isopentenyl diphosphate is bound by residues histidine 40 and histidine 74. Position 96 (cysteine 96) interacts with [4Fe-4S] cluster. Histidine 124 is a binding site for (2E)-4-hydroxy-3-methylbut-2-enyl diphosphate. Histidine 124 is a binding site for dimethylallyl diphosphate. Histidine 124 serves as a coordination point for isopentenyl diphosphate. Glutamate 126 acts as the Proton donor in catalysis. Residue threonine 167 coordinates (2E)-4-hydroxy-3-methylbut-2-enyl diphosphate. Position 213 (cysteine 213) interacts with [4Fe-4S] cluster. Serine 241, serine 242, asparagine 243, and serine 290 together coordinate (2E)-4-hydroxy-3-methylbut-2-enyl diphosphate. Dimethylallyl diphosphate contacts are provided by serine 241, serine 242, asparagine 243, and serine 290. Residues serine 241, serine 242, asparagine 243, and serine 290 each contribute to the isopentenyl diphosphate site.

It belongs to the IspH family. It depends on [4Fe-4S] cluster as a cofactor.

It carries out the reaction isopentenyl diphosphate + 2 oxidized [2Fe-2S]-[ferredoxin] + H2O = (2E)-4-hydroxy-3-methylbut-2-enyl diphosphate + 2 reduced [2Fe-2S]-[ferredoxin] + 2 H(+). The enzyme catalyses dimethylallyl diphosphate + 2 oxidized [2Fe-2S]-[ferredoxin] + H2O = (2E)-4-hydroxy-3-methylbut-2-enyl diphosphate + 2 reduced [2Fe-2S]-[ferredoxin] + 2 H(+). It functions in the pathway isoprenoid biosynthesis; dimethylallyl diphosphate biosynthesis; dimethylallyl diphosphate from (2E)-4-hydroxy-3-methylbutenyl diphosphate: step 1/1. The protein operates within isoprenoid biosynthesis; isopentenyl diphosphate biosynthesis via DXP pathway; isopentenyl diphosphate from 1-deoxy-D-xylulose 5-phosphate: step 6/6. Functionally, catalyzes the conversion of 1-hydroxy-2-methyl-2-(E)-butenyl 4-diphosphate (HMBPP) into a mixture of isopentenyl diphosphate (IPP) and dimethylallyl diphosphate (DMAPP). Acts in the terminal step of the DOXP/MEP pathway for isoprenoid precursor biosynthesis. The polypeptide is 4-hydroxy-3-methylbut-2-enyl diphosphate reductase (Chloroherpeton thalassium (strain ATCC 35110 / GB-78)).